Reading from the N-terminus, the 2039-residue chain is Calcium-channel protein CCH1 (2039 aa).

Disordered stretches follow at residues 1 to 171 and 206 to 288; these read MQGR…PPRS and PQLK…PQKE. The segment covering 64 to 80 has biased composition (basic and acidic residues); the sequence is STEEKKGDEYNGNDKDS. A glycan (N-linked (GlcNAc...) asparagine) is linked at N98. 2 stretches are compositionally biased toward low complexity: residues 122–132 and 147–164; these read SPSTKSAKSSS and FSSY…SPSS. The span at 209 to 226 shows a compositional bias: basic and acidic residues; sequence KSEKSRPVSDVGEDRGEG. Residues N257 and N269 are each glycosylated (N-linked (GlcNAc...) asparagine). Basic residues predominate over residues 271-281; that stretch reads SRKKPSPKFFH. S284 is subject to Phosphoserine. Residues 346–366 form a helical membrane-spanning segment; sequence YSLLYNTLLTFYAILLAIRTY. A glycan (N-linked (GlcNAc...) asparagine) is linked at N379. A helical membrane pass occupies residues 384–404; sequence FIFILSACFTGNDIAKIIAFG. The N-linked (GlcNAc...) asparagine glycan is linked to N559. The next 3 membrane-spanning stretches (helical) occupy residues 563 to 583, 658 to 678, and 691 to 711; these read MLVY…QGSF, IVNS…TDLM, and LFFI…LIAV. N754 and N760 each carry an N-linked (GlcNAc...) asparagine glycan. 3 helical membrane-spanning segments follow: residues 766–786, 809–829, and 841–861; these read LAIY…DIGM, ISIV…PNMW, and FIIS…VLGH. N-linked (GlcNAc...) asparagine glycosylation is found at N882 and N900. 2 helical membrane-spanning segments follow: residues 904 to 924 and 942 to 962; these read FYFF…EGVI and SFLS…LYAL. An N-linked (GlcNAc...) asparagine glycan is attached at N968. Residues 978–998 form a helical membrane-spanning segment; that stretch reads FFIIWFLLSNSVILNIFIALI. N1153 is a glycosylation site (N-linked (GlcNAc...) asparagine). Residues 1207–1227 form a helical membrane-spanning segment; sequence VFVFIFALATILLIVCSCYVT. A glycan (N-linked (GlcNAc...) asparagine) is linked at N1240. Transmembrane regions (helical) follow at residues 1247-1267 and 1277-1297; these read CAFI…DGFI and PWNF…IAYL. N1302 carries an N-linked (GlcNAc...) asparagine glycan. The next 2 helical transmembrane spans lie at 1340–1360 and 1408–1428; these read IFEA…WGLS and FASA…VDLL. N1433 carries an N-linked (GlcNAc...) asparagine glycan. 5 helical membrane-spanning segments follow: residues 1452-1472, 1529-1549, 1554-1574, 1596-1616, and 1618-1638; these read FLVL…VSFI, NFYY…MLLS, PGNL…VFLI, IRLS…HVPA, and HYWF…FIIP. N-linked (GlcNAc...) asparagine glycosylation is present at N1640. Residues 1654-1674 traverse the membrane as a helical segment; that stretch reads LPPILSLTYTWGVLFLVYAIA. N-linked (GlcNAc...) asparagine glycans are attached at residues N1687 and N1732. A helical membrane pass occupies residues 1748-1768; it reads LMSWNIISMYIFVNMFVSLII. 2 N-linked (GlcNAc...) asparagine glycosylation sites follow: N1770 and N1785. One can recognise an EF-hand domain in the interval 1787–1822; it reads SEIKKYIEAWSKFDTDGTGELELSYLPRIMHSFDGP. A disordered region spans residues 2011-2039; sequence PRMNQDSTMEPPEEPIDNNDDSANDLIDR. Over residues 2021-2033 the composition is skewed to acidic residues; that stretch reads PPEEPIDNNDDSA.

It belongs to the calcium channel alpha-1 subunit (TC 1.A.1.11) family. As to quaternary structure, interacts with MID1 to form a Ca(2+) influx channel.

The protein resides in the cell membrane. Functionally, voltage-gated, high-affinity calcium channel that functions together with MID1 to mediate calcium entry into cells. Required during conditions of environmental stress. In Saccharomyces cerevisiae (strain ATCC 204508 / S288c) (Baker's yeast), this protein is Calcium-channel protein CCH1 (CCH1).